An 812-amino-acid polypeptide reads, in one-letter code: Valine--tRNA ligase (812 aa).

The short motif at 46–56 (PTVSGQLHIGH) is the 'HIGH' region element. The 'KMSKS' region signature appears at 536-540 (KMSKS). Lys539 serves as a coordination point for ATP.

It belongs to the class-I aminoacyl-tRNA synthetase family. ValS type 2 subfamily. As to quaternary structure, monomer.

It is found in the cytoplasm. The catalysed reaction is tRNA(Val) + L-valine + ATP = L-valyl-tRNA(Val) + AMP + diphosphate. In terms of biological role, catalyzes the attachment of valine to tRNA(Val). As ValRS can inadvertently accommodate and process structurally similar amino acids such as threonine, to avoid such errors, it has a 'posttransfer' editing activity that hydrolyzes mischarged Thr-tRNA(Val) in a tRNA-dependent manner. This Rickettsia akari (strain Hartford) protein is Valine--tRNA ligase.